Reading from the N-terminus, the 945-residue chain is Isoleucine--tRNA ligase (945 aa).

The 'HIGH' region motif lies at 66–76 (PYANGDIHLGH). Glu-581 is a binding site for L-isoleucyl-5'-AMP. A 'KMSKS' region motif is present at residues 622–626 (KMSKS). Residue Lys-625 coordinates ATP. Positions 908, 911, 928, and 931 each coordinate Zn(2+).

It belongs to the class-I aminoacyl-tRNA synthetase family. IleS type 1 subfamily. In terms of assembly, monomer. Zn(2+) serves as cofactor.

The protein localises to the cytoplasm. It carries out the reaction tRNA(Ile) + L-isoleucine + ATP = L-isoleucyl-tRNA(Ile) + AMP + diphosphate. Its function is as follows. Catalyzes the attachment of isoleucine to tRNA(Ile). As IleRS can inadvertently accommodate and process structurally similar amino acids such as valine, to avoid such errors it has two additional distinct tRNA(Ile)-dependent editing activities. One activity is designated as 'pretransfer' editing and involves the hydrolysis of activated Val-AMP. The other activity is designated 'posttransfer' editing and involves deacylation of mischarged Val-tRNA(Ile). In Burkholderia ambifaria (strain MC40-6), this protein is Isoleucine--tRNA ligase.